Here is a 113-residue protein sequence, read N- to C-terminus: UPF0482 protein KPK_2871 (113 aa).

A signal peptide spans Met-1–Ala-28. A disordered region spans residues Gly-38 to Arg-61. The segment covering Asp-39–Ser-48 has biased composition (polar residues). The segment covering Met-49–Ser-59 has biased composition (basic and acidic residues).

The protein belongs to the UPF0482 family.

This Klebsiella pneumoniae (strain 342) protein is UPF0482 protein KPK_2871.